A 630-amino-acid chain; its full sequence is Plastin-3 (630 aa).

EF-hand domains lie at 12 to 47 and 52 to 87; these read DELDELKEAFAKVDLNSNGFICDYELHELFKEANMP and KVREIIQKLMLDGDRNKDGKISFDEFVYIFQEVKSS. Positions 25, 27, 29, 36, 65, 67, 69, 71, and 76 each coordinate Ca(2+). Actin-binding regions lie at residues 109 to 382 and 383 to 627; these read TSEL…ALTK and PENQ…GRGM. 2 consecutive Calponin-homology (CH) domains span residues 123–239 and 267–378; these read EEEK…KIGL and LSPE…NKYP. 4 positions are modified to phosphoserine: Ser-268, Ser-293, Ser-326, and Ser-339. Thr-391 carries the phosphothreonine modification. Calponin-homology (CH) domains follow at residues 397–506 and 518–627; these read TREE…RRYT and KAND…GRGM.

As to quaternary structure, monomer.

Its subcellular location is the cytoplasm. Its function is as follows. Actin-bundling protein. This chain is Plastin-3 (PLS3), found in Bos taurus (Bovine).